The chain runs to 87 residues: Sec-independent protein translocase protein TatA (87 aa).

The helical transmembrane segment at 3-23 (GTFSWTHLLIIALLFVVLFGA) threads the bilayer. Residues 47-87 (MQHETPQANAAPVQQPAQQLPPAQPAQAPAQPVNQAEQKSA) form a disordered region. The span at 52 to 87 (PQANAAPVQQPAQQLPPAQPAQAPAQPVNQAEQKSA) shows a compositional bias: low complexity.

The protein belongs to the TatA/E family. In terms of assembly, the Tat system comprises two distinct complexes: a TatABC complex, containing multiple copies of TatA, TatB and TatC subunits, and a separate TatA complex, containing only TatA subunits. Substrates initially bind to the TatABC complex, which probably triggers association of the separate TatA complex to form the active translocon.

Its subcellular location is the cell membrane. Functionally, part of the twin-arginine translocation (Tat) system that transports large folded proteins containing a characteristic twin-arginine motif in their signal peptide across membranes. TatA could form the protein-conducting channel of the Tat system. The sequence is that of Sec-independent protein translocase protein TatA from Nocardia farcinica (strain IFM 10152).